The primary structure comprises 147 residues: Large ribosomal subunit protein uL13 (147 aa).

It belongs to the universal ribosomal protein uL13 family. In terms of assembly, part of the 50S ribosomal subunit.

Its function is as follows. This protein is one of the early assembly proteins of the 50S ribosomal subunit, although it is not seen to bind rRNA by itself. It is important during the early stages of 50S assembly. The protein is Large ribosomal subunit protein uL13 of Limosilactobacillus fermentum (strain NBRC 3956 / LMG 18251) (Lactobacillus fermentum).